Here is a 448-residue protein sequence, read N- to C-terminus: Chromosomal replication initiator protein DnaA (448 aa).

Positions 1-72 are domain I, interacts with DnaA modulators; that stretch reads MPDLQELWNY…VEGAYEFAEI (72 aa). The segment at 72–110 is domain II; that stretch reads IELTPIFVLPGESDNLTPLEPEEEHVLTKAETPTFLRET. Positions 111–327 are domain III, AAA+ region; that stretch reads HLNSKYTFDT…GALVRVQAYA (217 aa). Glycine 155, glycine 157, lysine 158, and threonine 159 together coordinate ATP. The segment at 328-448 is domain IV, binds dsDNA; the sequence is TMQNAEITTS…ILDLKNTMKS (121 aa).

It belongs to the DnaA family. Oligomerizes as a right-handed, spiral filament on DNA at oriC.

It localises to the cytoplasm. Plays an essential role in the initiation and regulation of chromosomal replication. ATP-DnaA binds to the origin of replication (oriC) to initiate formation of the DNA replication initiation complex once per cell cycle. Binds the DnaA box (a 9 base pair repeat at the origin) and separates the double-stranded (ds)DNA. Forms a right-handed helical filament on oriC DNA; dsDNA binds to the exterior of the filament while single-stranded (ss)DNA is stabiized in the filament's interior. The ATP-DnaA-oriC complex binds and stabilizes one strand of the AT-rich DNA unwinding element (DUE), permitting loading of DNA polymerase. After initiation quickly degrades to an ADP-DnaA complex that is not apt for DNA replication. Binds acidic phospholipids. This is Chromosomal replication initiator protein DnaA from Latilactobacillus sakei subsp. sakei (strain 23K) (Lactobacillus sakei subsp. sakei).